The chain runs to 149 residues: UPF0178 protein VF_0601 (149 aa).

This sequence belongs to the UPF0178 family.

This Aliivibrio fischeri (strain ATCC 700601 / ES114) (Vibrio fischeri) protein is UPF0178 protein VF_0601.